The primary structure comprises 343 residues: Homeobox protein Hox-D13 (343 aa).

2 disordered regions span residues methionine 1–serine 28 and glycine 78–alanine 115. Positions serine 85 to alanine 115 are enriched in low complexity. A DNA-binding region (homeobox) is located at residues glycine 276–valine 335.

Belongs to the Abd-B homeobox family.

It localises to the nucleus. Functionally, sequence-specific transcription factor that binds gene promoters and activates their transcription. Part of a developmental regulatory system that provides cells with specific positional identities on the anterior-posterior axis. The protein is Homeobox protein Hox-D13 (HOXD13) of Homo sapiens (Human).